The chain runs to 82 residues: Small ribosomal subunit protein uS17c (82 aa).

Belongs to the universal ribosomal protein uS17 family. In terms of assembly, part of the 30S ribosomal subunit.

The protein localises to the plastid. Its subcellular location is the chloroplast. Its function is as follows. One of the primary rRNA binding proteins, it binds specifically to the 5'-end of 16S ribosomal RNA. This is Small ribosomal subunit protein uS17c (rps17) from Cyanidioschyzon merolae (strain NIES-3377 / 10D) (Unicellular red alga).